The chain runs to 416 residues: Adenylosuccinate synthetase (416 aa).

Residues 13-19 and 41-43 contribute to the GTP site; these read GDEGKGK and GHT. D14 (proton acceptor) is an active-site residue. The Mg(2+) site is built by D14 and G41. IMP-binding positions include 14–17, 39–42, T126, R140, Q220, T235, and R299; these read DEGK and NAGH. H42 serves as the catalytic Proton donor. 295-301 is a binding site for substrate; it reads TTTGRRR. GTP is bound by residues R301, 327–329, and 405–407; these read KLD and STS.

It belongs to the adenylosuccinate synthetase family. Homodimer. It depends on Mg(2+) as a cofactor.

The protein localises to the cytoplasm. The enzyme catalyses IMP + L-aspartate + GTP = N(6)-(1,2-dicarboxyethyl)-AMP + GDP + phosphate + 2 H(+). Its pathway is purine metabolism; AMP biosynthesis via de novo pathway; AMP from IMP: step 1/2. Plays an important role in the de novo pathway of purine nucleotide biosynthesis. Catalyzes the first committed step in the biosynthesis of AMP from IMP. This chain is Adenylosuccinate synthetase, found in Campylobacter curvus (strain 525.92).